A 741-amino-acid polypeptide reads, in one-letter code: Methionine--tRNA ligase (741 aa).

The span at Met1–Ser22 shows a compositional bias: polar residues. A disordered region spans residues Met1–Thr25. The 'HIGH' region motif lies at Pro36–His46. 4 residues coordinate Zn(2+): Cys167, Cys170, Cys179, and Cys183. A disordered region spans residues Val309 to Ile329. The segment covering Ser311–Ile329 has biased composition (low complexity). Position 381 (Thr381) interacts with ATP. A disordered region spans residues Lys591 to Thr629. The segment covering Pro599 to Thr611 has biased composition (acidic residues). The segment covering Ala616 to Thr629 has biased composition (polar residues). In terms of domain architecture, tRNA-binding spans Glu643–Gln741.

The protein belongs to the class-I aminoacyl-tRNA synthetase family. MetG type 1 subfamily. As to quaternary structure, homodimer. Zn(2+) is required as a cofactor.

It is found in the cytoplasm. It carries out the reaction tRNA(Met) + L-methionine + ATP = L-methionyl-tRNA(Met) + AMP + diphosphate. Its function is as follows. Is required not only for elongation of protein synthesis but also for the initiation of all mRNA translation through initiator tRNA(fMet) aminoacylation. The chain is Methionine--tRNA ligase from Haloquadratum walsbyi (strain DSM 16790 / HBSQ001).